The sequence spans 560 residues: 2-succinyl-5-enolpyruvyl-6-hydroxy-3-cyclohexene-1-carboxylate synthase (560 aa).

This sequence belongs to the TPP enzyme family. MenD subfamily. In terms of assembly, homodimer. Requires Mg(2+) as cofactor. It depends on Mn(2+) as a cofactor. The cofactor is thiamine diphosphate.

The enzyme catalyses isochorismate + 2-oxoglutarate + H(+) = 5-enolpyruvoyl-6-hydroxy-2-succinyl-cyclohex-3-ene-1-carboxylate + CO2. It functions in the pathway quinol/quinone metabolism; 1,4-dihydroxy-2-naphthoate biosynthesis; 1,4-dihydroxy-2-naphthoate from chorismate: step 2/7. It participates in quinol/quinone metabolism; menaquinone biosynthesis. In terms of biological role, catalyzes the thiamine diphosphate-dependent decarboxylation of 2-oxoglutarate and the subsequent addition of the resulting succinic semialdehyde-thiamine pyrophosphate anion to isochorismate to yield 2-succinyl-5-enolpyruvyl-6-hydroxy-3-cyclohexene-1-carboxylate (SEPHCHC). In Pectobacterium atrosepticum (strain SCRI 1043 / ATCC BAA-672) (Erwinia carotovora subsp. atroseptica), this protein is 2-succinyl-5-enolpyruvyl-6-hydroxy-3-cyclohexene-1-carboxylate synthase.